Consider the following 417-residue polypeptide: Serine hydroxymethyltransferase (417 aa).

Residues L121 and 125 to 127 contribute to the (6S)-5,6,7,8-tetrahydrofolate site; that span reads GHL. K229 is modified (N6-(pyridoxal phosphate)lysine). 355–357 is a binding site for (6S)-5,6,7,8-tetrahydrofolate; the sequence is SPF.

The protein belongs to the SHMT family. Homodimer. The cofactor is pyridoxal 5'-phosphate.

It localises to the cytoplasm. It carries out the reaction (6R)-5,10-methylene-5,6,7,8-tetrahydrofolate + glycine + H2O = (6S)-5,6,7,8-tetrahydrofolate + L-serine. The protein operates within one-carbon metabolism; tetrahydrofolate interconversion. Its pathway is amino-acid biosynthesis; glycine biosynthesis; glycine from L-serine: step 1/1. Functionally, catalyzes the reversible interconversion of serine and glycine with tetrahydrofolate (THF) serving as the one-carbon carrier. This reaction serves as the major source of one-carbon groups required for the biosynthesis of purines, thymidylate, methionine, and other important biomolecules. Also exhibits THF-independent aldolase activity toward beta-hydroxyamino acids, producing glycine and aldehydes, via a retro-aldol mechanism. The sequence is that of Serine hydroxymethyltransferase from Xylella fastidiosa (strain 9a5c).